Reading from the N-terminus, the 122-residue chain is Urease subunit beta (122 aa).

The disordered stretch occupies residues 102–122; it reads DGGTAVAGEPRPGIAAERDHQ.

The protein belongs to the urease beta subunit family. As to quaternary structure, heterotrimer of UreA (gamma), UreB (beta) and UreC (alpha) subunits. Three heterotrimers associate to form the active enzyme.

It is found in the cytoplasm. It catalyses the reaction urea + 2 H2O + H(+) = hydrogencarbonate + 2 NH4(+). It functions in the pathway nitrogen metabolism; urea degradation; CO(2) and NH(3) from urea (urease route): step 1/1. The chain is Urease subunit beta from Paenarthrobacter aurescens (strain TC1).